The primary structure comprises 380 residues: Epoxyqueuosine reductase (380 aa).

Asp134 serves as the catalytic Proton donor. The 4Fe-4S ferredoxin-type 1 domain occupies 179–208 (PPDQPIEDQCGSCTKCIDICPTGALIQGGQ). Residues Cys188, Cys191, Cys194, Cys198, Cys214, Cys240, Cys243, and Cys247 each contribute to the [4Fe-4S] cluster site. Residues 226–258 (PEEYRDKIGNRIYGCDTCQTVCPKNKGMDFHNH) form the 4Fe-4S ferredoxin-type 2 domain.

The protein belongs to the QueG family. In terms of assembly, monomer. It depends on cob(II)alamin as a cofactor. [4Fe-4S] cluster is required as a cofactor.

It is found in the cytoplasm. It catalyses the reaction epoxyqueuosine(34) in tRNA + AH2 = queuosine(34) in tRNA + A + H2O. It functions in the pathway tRNA modification; tRNA-queuosine biosynthesis. Catalyzes the conversion of epoxyqueuosine (oQ) to queuosine (Q), which is a hypermodified base found in the wobble positions of tRNA(Asp), tRNA(Asn), tRNA(His) and tRNA(Tyr). The protein is Epoxyqueuosine reductase of Bacillus anthracis.